The primary structure comprises 459 residues: Arginine biosynthesis bifunctional protein ArgJ, mitochondrial (459 aa).

Substrate is bound by residues Thr-187, Lys-216, Thr-227, Glu-314, Asn-454, and Thr-459. Catalysis depends on Thr-227, which acts as the Nucleophile.

The protein belongs to the ArgJ family. Heterodimer of an alpha and a beta chain. In terms of processing, the alpha and beta chains are autoproteolytically processed from a single precursor protein within the mitochondrion.

Its subcellular location is the mitochondrion matrix. It catalyses the reaction N(2)-acetyl-L-ornithine + L-glutamate = N-acetyl-L-glutamate + L-ornithine. The enzyme catalyses L-glutamate + acetyl-CoA = N-acetyl-L-glutamate + CoA + H(+). It functions in the pathway amino-acid biosynthesis; L-arginine biosynthesis; L-ornithine and N-acetyl-L-glutamate from L-glutamate and N(2)-acetyl-L-ornithine (cyclic): step 1/1. The protein operates within amino-acid biosynthesis; L-arginine biosynthesis; N(2)-acetyl-L-ornithine from L-glutamate: step 1/4. In terms of biological role, catalyzes two activities which are involved in the cyclic version of arginine biosynthesis: the synthesis of acetylglutamate from glutamate and acetyl-CoA, and of ornithine by transacetylation between acetylornithine and glutamate. The chain is Arginine biosynthesis bifunctional protein ArgJ, mitochondrial from Uncinocarpus reesii (strain UAMH 1704).